We begin with the raw amino-acid sequence, 778 residues long: LPS-assembly protein LptD (778 aa).

An N-terminal signal peptide occupies residues 1 to 23 (MKTRYSVLSVAMTAAFYTQYAQA).

It belongs to the LptD family. As to quaternary structure, component of the lipopolysaccharide transport and assembly complex. Interacts with LptE and LptA.

The protein resides in the cell outer membrane. Its function is as follows. Together with LptE, is involved in the assembly of lipopolysaccharide (LPS) at the surface of the outer membrane. The polypeptide is LPS-assembly protein LptD (Actinobacillus pleuropneumoniae serotype 5b (strain L20)).